The sequence spans 821 residues: Glycogen phosphorylase (821 aa).

Lysine 667 is subject to N6-(pyridoxal phosphate)lysine.

The protein belongs to the glycogen phosphorylase family. Pyridoxal 5'-phosphate is required as a cofactor.

It catalyses the reaction [(1-&gt;4)-alpha-D-glucosyl](n) + phosphate = [(1-&gt;4)-alpha-D-glucosyl](n-1) + alpha-D-glucose 1-phosphate. Functionally, phosphorylase is an important allosteric enzyme in carbohydrate metabolism. Enzymes from different sources differ in their regulatory mechanisms and in their natural substrates. However, all known phosphorylases share catalytic and structural properties. This Haemophilus influenzae (strain ATCC 51907 / DSM 11121 / KW20 / Rd) protein is Glycogen phosphorylase (glgP).